The following is a 748-amino-acid chain: Histone-lysine N-methyltransferase EZH2 (748 aa).

Residues 184–199 (YEDDEDGDDNQDDEQD) are compositionally biased toward acidic residues. 2 disordered regions span residues 184-220 (YEDD…LRKF) and 342-428 (AERI…NIEP). Over residues 200 to 220 (DTAKDQDDNMEDKETQPLRKF) the composition is skewed to basic and acidic residues. Over residues 347–359 (TPPKRPSGRRRGR) the composition is skewed to basic residues. Positions 362–374 (NNTSRPSTPTVNV) are enriched in polar residues. Basic and acidic residues predominate over residues 376–387 (EAKDTDSDREAG). Positions 505 to 607 (CRKIQLKKDG…SKNVSCKNCS (103 aa)) constitute a CXC domain. The region spanning 614–729 (KHLLLAPSDV…TGEELFFDYR (116 aa)) is the SET domain.

Belongs to the class V-like SAM-binding methyltransferase superfamily. Histone-lysine methyltransferase family. EZ subfamily. In terms of assembly, component of the prc2/eed-ezh2 complex.

Its subcellular location is the nucleus. The enzyme catalyses L-lysyl(27)-[histone H3] + 3 S-adenosyl-L-methionine = N(6),N(6),N(6)-trimethyl-L-lysyl(27)-[histone H3] + 3 S-adenosyl-L-homocysteine + 3 H(+). Functionally, polycomb group (PcG) protein. Catalytic subunit of the prc2/eed-ezh2 complex, which methylates 'Lys-9' and 'Lys-27' of histone H3, leading to transcriptional repression of the affected target gene. May repress transcription of the egr2 and en2 genes. May regulate the circadian clock via histone methylation at the promoter of the circadian genes. The chain is Histone-lysine N-methyltransferase EZH2 (ezh2-a) from Xenopus laevis (African clawed frog).